Here is a 218-residue protein sequence, read N- to C-terminus: Riboflavin synthase (218 aa).

Lumazine-binding repeat units follow at residues 1–97 (MFTG…FGGH) and 98–194 (IVSG…ERLL). Residues 4–6 (GII), 48–50 (CLT), 62–67 (DLSIET), 101–103 (GHV), lysine 136, 145–147 (SLT), and 159–164 (TIVPHT) each bind 2,4-dihydroxypteridine.

Homotrimer.

The enzyme catalyses 2 6,7-dimethyl-8-(1-D-ribityl)lumazine + H(+) = 5-amino-6-(D-ribitylamino)uracil + riboflavin. The protein operates within cofactor biosynthesis; riboflavin biosynthesis; riboflavin from 2-hydroxy-3-oxobutyl phosphate and 5-amino-6-(D-ribitylamino)uracil: step 2/2. Catalyzes the dismutation of two molecules of 6,7-dimethyl-8-ribityllumazine, resulting in the formation of riboflavin and 5-amino-6-(D-ribitylamino)uracil. In Photobacterium phosphoreum, this protein is Riboflavin synthase.